Reading from the N-terminus, the 289-residue chain is Nucleotide-binding protein CHY_0272 (289 aa).

8 to 15 lines the ATP pocket; sequence GLSGAGKT. 59-62 is a GTP binding site; it reads DVRG.

Belongs to the RapZ-like family.

Functionally, displays ATPase and GTPase activities. In Carboxydothermus hydrogenoformans (strain ATCC BAA-161 / DSM 6008 / Z-2901), this protein is Nucleotide-binding protein CHY_0272.